Here is a 358-residue protein sequence, read N- to C-terminus: Chorismate synthase (358 aa).

Residue Arg-48 coordinates NADP(+). Residues 125-127 (RAS), Ser-277, 292-296 (KPIPS), and Arg-318 contribute to the FMN site.

It belongs to the chorismate synthase family. In terms of assembly, homotetramer. FMNH2 is required as a cofactor.

The enzyme catalyses 5-O-(1-carboxyvinyl)-3-phosphoshikimate = chorismate + phosphate. Its pathway is metabolic intermediate biosynthesis; chorismate biosynthesis; chorismate from D-erythrose 4-phosphate and phosphoenolpyruvate: step 7/7. Functionally, catalyzes the anti-1,4-elimination of the C-3 phosphate and the C-6 proR hydrogen from 5-enolpyruvylshikimate-3-phosphate (EPSP) to yield chorismate, which is the branch point compound that serves as the starting substrate for the three terminal pathways of aromatic amino acid biosynthesis. This reaction introduces a second double bond into the aromatic ring system. The chain is Chorismate synthase from Desulfatibacillum aliphaticivorans.